The primary structure comprises 381 residues: Putrescine N-methyltransferase 3 (381 aa).

The tract at residues 21–81 is disordered; it reads MNGYQNGTSK…TISHDNGNEL (61 aa). Polar residues-rich tracts occupy residues 23 to 39 and 46 to 81; these read GYQN…QNGT and HQNG…GNEL. The PABS domain occupies 92-329; sequence PGWFSEFSAL…GVIGYMLCST (238 aa). S-adenosyl-L-methionine contacts are provided by residues Gln123, Glu198, and 229-230; that span reads DG. The active-site Proton acceptor is the Asp248. Residue Tyr317 participates in S-adenosyl-L-methionine binding.

This sequence belongs to the class I-like SAM-binding methyltransferase superfamily. Putrescine methyltransferase family. Predominantly expressed in roots.

The enzyme catalyses putrescine + S-adenosyl-L-methionine = N-methylputrescine + S-adenosyl-L-homocysteine + H(+). Its pathway is alkaloid biosynthesis; nicotine biosynthesis. In terms of biological role, involved in the biosynthesis of pyridine alkaloid natural products, leading mainly to the production of anabasine, anatabine, nicotine and nornicotine, effective deterrents against herbivores with antiparasitic and pesticide properties (neurotoxins); nornicotine serves as the precursor in the synthesis of the carcinogen compound N'-nitrosonornicotine (NNN). Methyltransferase that mediates the conversion of putrescine to N-methylputrescine. Promotes leaves ripening. In Nicotiana tabacum (Common tobacco), this protein is Putrescine N-methyltransferase 3.